The primary structure comprises 189 residues: Ribonuclease HII (189 aa).

Residues 1 to 189 (MIAGVDEAGR…PVRRALNIDC (189 aa)) form the RNase H type-2 domain. A divalent metal cation-binding residues include D6, E7, and D98.

This sequence belongs to the RNase HII family. Mn(2+) serves as cofactor. It depends on Mg(2+) as a cofactor.

It is found in the cytoplasm. The enzyme catalyses Endonucleolytic cleavage to 5'-phosphomonoester.. Endonuclease that specifically degrades the RNA of RNA-DNA hybrids. This chain is Ribonuclease HII, found in Acinetobacter baylyi (strain ATCC 33305 / BD413 / ADP1).